The following is a 273-amino-acid chain: 4-hydroxy-tetrahydrodipicolinate reductase (273 aa).

Residues 12 to 17 (GAGGRM) and Glu38 each bind NAD(+). Arg39 is an NADP(+) binding site. Residues 102-104 (GTT) and 126-129 (AANF) each bind NAD(+). Catalysis depends on His159, which acts as the Proton donor/acceptor. A (S)-2,3,4,5-tetrahydrodipicolinate-binding site is contributed by His160. Lys163 (proton donor) is an active-site residue. Residue 169-170 (GT) coordinates (S)-2,3,4,5-tetrahydrodipicolinate.

It belongs to the DapB family. In terms of assembly, homotetramer.

It localises to the cytoplasm. The enzyme catalyses (S)-2,3,4,5-tetrahydrodipicolinate + NAD(+) + H2O = (2S,4S)-4-hydroxy-2,3,4,5-tetrahydrodipicolinate + NADH + H(+). It catalyses the reaction (S)-2,3,4,5-tetrahydrodipicolinate + NADP(+) + H2O = (2S,4S)-4-hydroxy-2,3,4,5-tetrahydrodipicolinate + NADPH + H(+). It functions in the pathway amino-acid biosynthesis; L-lysine biosynthesis via DAP pathway; (S)-tetrahydrodipicolinate from L-aspartate: step 4/4. Catalyzes the conversion of 4-hydroxy-tetrahydrodipicolinate (HTPA) to tetrahydrodipicolinate. The chain is 4-hydroxy-tetrahydrodipicolinate reductase from Yersinia pseudotuberculosis serotype O:1b (strain IP 31758).